Consider the following 147-residue polypeptide: 3-dehydroquinate dehydratase (147 aa).

Tyr24 serves as the catalytic Proton acceptor. 3 residues coordinate substrate: Asn75, His81, and Asp88. His101 serves as the catalytic Proton donor. Residues 102–103 (IS) and Arg112 each bind substrate.

Belongs to the type-II 3-dehydroquinase family. As to quaternary structure, homododecamer.

It catalyses the reaction 3-dehydroquinate = 3-dehydroshikimate + H2O. Its pathway is metabolic intermediate biosynthesis; chorismate biosynthesis; chorismate from D-erythrose 4-phosphate and phosphoenolpyruvate: step 3/7. In terms of biological role, catalyzes a trans-dehydration via an enolate intermediate. This is 3-dehydroquinate dehydratase from Cereibacter sphaeroides (strain KD131 / KCTC 12085) (Rhodobacter sphaeroides).